The chain runs to 156 residues: Small ribosomal subunit protein uS7c (156 aa).

Belongs to the universal ribosomal protein uS7 family. In terms of assembly, part of the 30S ribosomal subunit.

It is found in the plastid. It localises to the chloroplast. One of the primary rRNA binding proteins, it binds directly to 16S rRNA where it nucleates assembly of the head domain of the 30S subunit. This chain is Small ribosomal subunit protein uS7c (rps7), found in Porphyra purpurea (Red seaweed).